The primary structure comprises 547 residues: DNA mismatch repair protein MutL (547 aa).

This sequence belongs to the DNA mismatch repair MutL/HexB family.

In terms of biological role, this protein is involved in the repair of mismatches in DNA. It is required for dam-dependent methyl-directed DNA mismatch repair. May act as a 'molecular matchmaker', a protein that promotes the formation of a stable complex between two or more DNA-binding proteins in an ATP-dependent manner without itself being part of a final effector complex. In Deinococcus radiodurans (strain ATCC 13939 / DSM 20539 / JCM 16871 / CCUG 27074 / LMG 4051 / NBRC 15346 / NCIMB 9279 / VKM B-1422 / R1), this protein is DNA mismatch repair protein MutL.